The sequence spans 441 residues: C4-dicarboxylate transport protein (441 aa).

Transmembrane regions (helical) follow at residues 9–29 (SLYFQVIVAIICGVLLGHFMP), 45–65 (LVKMMITPIIFCTVVVGIAGM), 79–99 (LLYFEVVTTLALIIGLVVVNV), 145–165 (AFAEGEILQVLLFSVLFGFAL), 187–207 (FAAIGFIMKLAPIGAFGAMAF), 220–240 (LAALMGSFYLTCLLFIGLVLG), 308–328 (IYLTMAAIFIAQACGIELTLT), and 356–376 (AATLATVPDIPVAGLALILGI).

The protein belongs to the dicarboxylate/amino acid:cation symporter (DAACS) (TC 2.A.23) family.

Its subcellular location is the cell inner membrane. Responsible for the transport of dicarboxylates such as succinate, fumarate, and malate from the periplasm across the membrane. The chain is C4-dicarboxylate transport protein from Laribacter hongkongensis (strain HLHK9).